Reading from the N-terminus, the 390-residue chain is HIT domain-containing protein DDB_G0272839 (390 aa).

The interval 168–201 is disordered; that stretch reads DNENEKEKEKEMELDNDNTNTESIPPITSKSTST. The span at 184-201 shows a compositional bias: low complexity; that stretch reads DNTNTESIPPITSKSTST. The HIT domain occupies 232 to 343; that stretch reads YFCNKPESFL…ISNDYNTKYL (112 aa).

This chain is HIT domain-containing protein DDB_G0272839, found in Dictyostelium discoideum (Social amoeba).